Reading from the N-terminus, the 288-residue chain is Quinate/shikimate dehydrogenase (288 aa).

2 residues coordinate substrate: Lys-71 and Asp-107. Residues 132 to 135 (AGGA), 155 to 158 (NRRD), Lys-205, 232 to 235 (CVYN), and Gly-255 contribute to the NAD(+) site.

It belongs to the shikimate dehydrogenase family. Homodimer.

The catalysed reaction is L-quinate + NAD(+) = 3-dehydroquinate + NADH + H(+). The enzyme catalyses L-quinate + NADP(+) = 3-dehydroquinate + NADPH + H(+). It catalyses the reaction shikimate + NADP(+) = 3-dehydroshikimate + NADPH + H(+). It carries out the reaction shikimate + NAD(+) = 3-dehydroshikimate + NADH + H(+). It functions in the pathway metabolic intermediate biosynthesis; chorismate biosynthesis; chorismate from D-erythrose 4-phosphate and phosphoenolpyruvate: step 4/7. Its function is as follows. The actual biological function of YdiB remains unclear, nor is it known whether 3-dehydroshikimate or quinate represents the natural substrate. Catalyzes the reversible NAD-dependent reduction of both 3-dehydroshikimate (DHSA) and 3-dehydroquinate to yield shikimate (SA) and quinate, respectively. It can use both NAD or NADP for catalysis, however it has higher catalytic efficiency with NAD. The sequence is that of Quinate/shikimate dehydrogenase from Shigella flexneri.